The chain runs to 238 residues: Purine nucleoside phosphorylase DeoD-type (238 aa).

H4 is a binding site for a purine D-ribonucleoside. Phosphate-binding positions include G20, R24, R43, and 87-90 (RVGS). A purine D-ribonucleoside contacts are provided by residues 179–181 (EME) and 203–204 (SD). D204 serves as the catalytic Proton donor.

The protein belongs to the PNP/UDP phosphorylase family. Homohexamer; trimer of homodimers.

It catalyses the reaction a purine D-ribonucleoside + phosphate = a purine nucleobase + alpha-D-ribose 1-phosphate. It carries out the reaction a purine 2'-deoxy-D-ribonucleoside + phosphate = a purine nucleobase + 2-deoxy-alpha-D-ribose 1-phosphate. Functionally, catalyzes the reversible phosphorolytic breakdown of the N-glycosidic bond in the beta-(deoxy)ribonucleoside molecules, with the formation of the corresponding free purine bases and pentose-1-phosphate. In Haemophilus influenzae (strain PittGG), this protein is Purine nucleoside phosphorylase DeoD-type.